The following is a 348-amino-acid chain: Dihydroorotase (348 aa).

Residues His-17 and His-19 each contribute to the Zn(2+) site. Substrate contacts are provided by residues 19 to 21 (HLR) and Asn-45. Lys-103, His-140, and His-178 together coordinate Zn(2+). Lys-103 carries the N6-carboxylysine modification. Position 140 (His-140) interacts with substrate. Leu-223 serves as a coordination point for substrate. Position 251 (Asp-251) interacts with Zn(2+). Asp-251 is an active-site residue. The substrate site is built by His-255 and Ala-267.

The protein belongs to the metallo-dependent hydrolases superfamily. DHOase family. Class II DHOase subfamily. As to quaternary structure, homodimer. Zn(2+) is required as a cofactor.

The catalysed reaction is (S)-dihydroorotate + H2O = N-carbamoyl-L-aspartate + H(+). It participates in pyrimidine metabolism; UMP biosynthesis via de novo pathway; (S)-dihydroorotate from bicarbonate: step 3/3. Its function is as follows. Catalyzes the reversible cyclization of carbamoyl aspartate to dihydroorotate. The chain is Dihydroorotase from Escherichia coli O157:H7.